The following is a 431-amino-acid chain: Protein S-Myc (431 aa).

Tyr-36 is subject to Phosphotyrosine; by Tyr-kinases. The bHLH domain occupies 348–400 (ERRRNHNRMERQRRDIMRSSFLNLRDLVPELVHNEKAAKVVILKKATEYIHTL). Positions 400-421 (LQADESKLLVERKKLYERQQQL) are leucine-zipper.

Efficient DNA binding requires dimerization with another bHLH protein.

The protein localises to the nucleus. In terms of biological role, has apoptosis-inducing activity. This Mus musculus (Mouse) protein is Protein S-Myc (Mycs).